Here is a 109-residue protein sequence, read N- to C-terminus: Iron-sulfur cluster assembly protein CyaY (109 aa).

Belongs to the frataxin family.

Functionally, involved in iron-sulfur (Fe-S) cluster assembly. May act as a regulator of Fe-S biogenesis. The protein is Iron-sulfur cluster assembly protein CyaY of Acidovorax ebreus (strain TPSY) (Diaphorobacter sp. (strain TPSY)).